The chain runs to 865 residues: Leucine--tRNA ligase (865 aa).

The 'HIGH' region signature appears at 36-46 (PYPSGKIHMGH). The 'KMSKS' region signature appears at 608–612 (KMSKS). ATP is bound at residue Lys-611.

Belongs to the class-I aminoacyl-tRNA synthetase family.

It localises to the cytoplasm. The catalysed reaction is tRNA(Leu) + L-leucine + ATP = L-leucyl-tRNA(Leu) + AMP + diphosphate. This Wolbachia sp. subsp. Brugia malayi (strain TRS) protein is Leucine--tRNA ligase.